The primary structure comprises 3432 residues: Genome polyprotein (3432 aa).

The interaction with host EXOC1 stretch occupies residues 2–15 (TKKPGGPGKNRAIN). The Cytoplasmic portion of the chain corresponds to 2 to 109 (TKKPGGPGKN…RKQNKRGGNE (108 aa)). The tract at residues 37–72 (LLDGRGPVRFVLALITFFKFTALAPTKALLGRWKAV) is hydrophobic; homodimerization of capsid protein C. Residues 106 to 127 (GGNEGSIMWLASLAVVIAYAGA) constitute a propeptide, ER anchor for the capsid protein C, removed in mature form by serine protease NS3. Residues 110–130 (GSIMWLASLAVVIAYAGAMKL) traverse the membrane as a helical segment. Over 131-253 (SNFQGKLLMT…ATRYLMKTEN (123 aa)) the chain is Extracellular. The N-linked (GlcNAc...) asparagine; by host glycan is linked to Asn142. Residues 254 to 274 (WIIRNPGYAFLAATLGWMLGS) form a helical membrane-spanning segment. The Cytoplasmic portion of the chain corresponds to 275–279 (NNGQR). A helical membrane pass occupies residues 280–294 (VVFTILLLLVAPAYS). The Extracellular portion of the chain corresponds to 295–746 (FNCLGMGNRD…QVFGGAFRTL (452 aa)). Disulfide bonds link Cys297/Cys324, Cys354/Cys410, Cys354/Cys415, Cys368/Cys399, Cys386/Cys410, and Cys386/Cys415. The tract at residues 392–405 (DRGWGNGCGLFGKG) is fusion peptide. Residue Asn448 is glycosylated (N-linked (GlcNAc...) asparagine; by host). 2 cysteine pairs are disulfide-bonded: Cys484–Cys581 and Cys598–Cys629. The chain crosses the membrane as a helical span at residues 747–767 (FGGMSWITQGLMGALLLWMGV). Topologically, residues 768–773 (NARDRS) are cytoplasmic. A helical transmembrane segment spans residues 774–794 (IALAFLATGGVLVFLATNVHA). Residues 795–1219 (DTGCAIDITR…AFAEANSGGD (425 aa)) lie on the Extracellular side of the membrane. Cystine bridges form between Cys798-Cys809, Cys849-Cys937, Cys973-Cys1017, Cys1074-Cys1123, Cys1085-Cys1106, and Cys1107-Cys1110. N-linked (GlcNAc...) asparagine; by host glycosylation is found at Asn924 and Asn1001. Residues 1220–1240 (VLHLALIAVFKIQPAFLVMNM) traverse the membrane as a helical segment. Topologically, residues 1241-1250 (LSTRWTNQEN) are cytoplasmic. Residues 1251 to 1271 (VVLVLGAALFQLASVDLQIGV) traverse the membrane as a helical segment. Residue His1272 is a topological domain, lumenal. The chain crosses the membrane as a helical span at residues 1273-1293 (GILNAAAIAWMIVRAITFPTT). Residues 1294–1309 (SSVTMPVLALLTPGMR) lie on the Cytoplasmic side of the membrane. The chain crosses the membrane as a helical span at residues 1310–1330 (ALYLDTYRIILLVIGICSLLQ). Over 1331–1341 (ERKKTMAKKKG) the chain is Lumenal. Residues 1342-1362 (AVLLGLALTSTGWFSPTTIAA) form a helical membrane-spanning segment. At 1363–1374 (GLMVCNPNKKRG) the chain is on the cytoplasmic side. Residues 1375-1395 (WPATEFLSAVGLMFAIVGGLA) form a helical membrane-spanning segment. Topologically, residues 1396 to 1398 (ELD) are lumenal. A helical transmembrane segment spans residues 1399–1419 (IESMSIPFMLAGLMAVSYVVS). The Cytoplasmic segment spans residues 1420–1476 (GKATDMWLERAADISWEMDAAITGSSRRLDVKLDDDGDFHLIDDPGVPWKVWVLRMS). The interacts with and activates NS3 protease stretch occupies residues 1427-1466 (LERAADISWEMDAAITGSSRRLDVKLDDDGDFHLIDDPGV). Residues 1477–1497 (CIGLAALTPWAIVPAAFGYWL) constitute an intramembrane region (helical). Over 1498–2173 (TLKTTKRGGV…RMALEELPDA (676 aa)) the chain is Cytoplasmic. Residues 1505-1682 (GGVFWDTPSP…DRQEEPVPEA (178 aa)) form the Peptidase S7 domain. Active-site charge relay system; for serine protease NS3 activity residues include His1555, Asp1579, and Ser1639. Residues 1685–1841 (PNMLRKRQMT…DSNAPIHDLQ (157 aa)) enclose the Helicase ATP-binding domain. The tract at residues 1689–1692 (RKRQ) is important for RNA-binding. An ATP-binding site is contributed by 1698–1705 (LHPGSGKT). A DEAH box motif is present at residues 1789 to 1792 (DEAH). A Helicase C-terminal domain is found at 1852-2017 (GYEWITEYAG…GLVAQLYGPE (166 aa)). Lys1893 bears the N6-acetyllysine; by host mark. The segment at 1950 to 1971 (NPSPITSASAAQRRGRVGRNPN) is disordered. Positions 2168–2172 (EELPD) are regulates the ATPase activity of NS3 helicase. The helical transmembrane segment at 2174-2194 (LETITLIVAITVMTGGFFLLM) threads the bilayer. Residues 2195–2199 (MQRKG) are Lumenal-facing. Residues 2200–2220 (IGKMGLGALVLTLATFFLWAA) constitute an intramembrane region (helical). A topological domain (lumenal) is located at residue Glu2221. The helical transmembrane segment at 2222-2242 (VPGTKIAGTLLIALLLMVVLI) threads the bilayer. At 2243–2257 (PEPEKQRSQTDNQLA) the chain is on the cytoplasmic side. A helical membrane pass occupies residues 2258 to 2278 (VFLICVLTVVGVVAANEYGML). Topologically, residues 2279 to 2311 (EKTKADLKSMFVGKTQASGLTGLPSMALDLRPA) are lumenal. An intramembrane region (helical) is located at residues 2312 to 2332 (TAWALYGGSTVVLTPLLKHLI). Residues 2333–2368 (TSEYVTTSLASINSQAGSLFVLPRGVPFTDLDLTVG) lie on the Lumenal side of the membrane. The helical transmembrane segment at 2369-2389 (LVFLGCWGQITLTTFLTAMVL) threads the bilayer. At 2390 to 2444 (ATLHYGYMLPGWQAEALRAAQRRTAAGIMKNAVVDGMVATDVPELERTTPLMQKK) the chain is on the cytoplasmic side. Residues 2445-2465 (VGQVLLIGVSVAAFLVNPNVT) traverse the membrane as a helical segment. Over 2466–2469 (TVRE) the chain is Lumenal. The chain crosses the membrane as a helical span at residues 2470-2490 (AGVLVTAATLTLWDNGASAVW). The Cytoplasmic segment spans residues 2491–3432 (NSTTATGLCH…DVLIQEDRVI (942 aa)). In terms of domain architecture, mRNA cap 0-1 NS5-type MT spans 2528 to 2793 (GRPGGRTLGE…DVNLGSGTRA (266 aa)). Ser2583 is an S-adenosyl-L-methionine binding site. Ser2583 is modified (phosphoserine). Lys2588 serves as the catalytic For 2'-O-MTase activity. S-adenosyl-L-methionine-binding residues include Gly2613, Trp2614, Thr2631, Lys2632, Asp2658, and Val2659. Residue Asp2673 is the For 2'-O-MTase activity of the active site. Ile2674 is a binding site for S-adenosyl-L-methionine. Catalysis depends on for 2'-O-MTase activity residues Lys2709 and Glu2745. An S-adenosyl-L-methionine-binding site is contributed by Tyr2747. The Zn(2+) site is built by Glu2967, His2971, Cys2976, and Cys2979. The RdRp catalytic domain maps to 3057-3209 (GKMYADDTAG…KPLDDRFATA (153 aa)). His3244, Cys3260, and Cys3379 together coordinate Zn(2+).

In the N-terminal section; belongs to the class I-like SAM-binding methyltransferase superfamily. mRNA cap 0-1 NS5-type methyltransferase family. In terms of assembly, homodimer. Interacts (via N-terminus) with host EXOC1 (via C-terminus); this interaction results in EXOC1 degradation through the proteasome degradation pathway. As to quaternary structure, forms heterodimers with envelope protein E in the endoplasmic reticulum and Golgi. Homodimer; in the endoplasmic reticulum and Golgi. Interacts with protein prM. Interacts with non-structural protein 1. Interacts with host HSPA5. In terms of assembly, homodimer; Homohexamer when secreted. Interacts with envelope protein E. NS1 interacts with NS4B. Interacts with host complement protein CFH; this interaction leads to the degradation of C3. As to quaternary structure, interacts (via N-terminus) with serine protease NS3. Forms a heterodimer with serine protease NS3. May form homooligomers. In terms of assembly, forms a heterodimer with NS2B. Interacts with non-structural protein 2A (via N-terminus). Interacts with NS4B. Interacts with unphosphorylated RNA-directed RNA polymerase NS5; this interaction stimulates RNA-directed RNA polymerase NS5 guanylyltransferase activity. Interacts with host ILF2. As to quaternary structure, interacts with serine protease NS3. Homodimer. Interacts with host STAT2; this interaction inhibits the phosphorylation of the latter, and, when all viral proteins are present (polyprotein), targets STAT2 for degradation. Interacts with serine protease NS3. Mn(2+) is required as a cofactor. Requires Mg(2+) as cofactor. Specific enzymatic cleavages in vivo yield mature proteins. Cleavages in the lumen of endoplasmic reticulum are performed by host signal peptidase, whereas cleavages in the cytoplasmic side are performed by serine protease NS3. Signal cleavage at the 2K-4B site requires a prior NS3 protease-mediated cleavage at the 4A-2K site. Post-translationally, cleaved in post-Golgi vesicles by a host furin, releasing the mature small envelope protein M, and peptide pr. This cleavage is incomplete as up to 30% of viral particles still carry uncleaved prM. In terms of processing, N-glycosylated. N-glycosylated. The excreted form is glycosylated and this is required for efficient secretion of the protein from infected cells. Post-translationally, acetylated by host KAT5. Acetylation modulates NS3 RNA-binding and unwinding activities and plays an important positive role for viral replication. In terms of processing, phosphorylated on serines residues. This phosphorylation may trigger NS5 nuclear localization.

Its subcellular location is the virion. It is found in the host nucleus. The protein resides in the host cytoplasm. It localises to the host perinuclear region. The protein localises to the secreted. Its subcellular location is the virion membrane. It is found in the host endoplasmic reticulum membrane. The protein resides in the host cell surface. It catalyses the reaction Selective hydrolysis of -Xaa-Xaa-|-Yaa- bonds in which each of the Xaa can be either Arg or Lys and Yaa can be either Ser or Ala.. The catalysed reaction is RNA(n) + a ribonucleoside 5'-triphosphate = RNA(n+1) + diphosphate. It carries out the reaction a ribonucleoside 5'-triphosphate + H2O = a ribonucleoside 5'-diphosphate + phosphate + H(+). The enzyme catalyses ATP + H2O = ADP + phosphate + H(+). It catalyses the reaction a 5'-end (5'-triphosphoguanosine)-ribonucleoside in mRNA + S-adenosyl-L-methionine = a 5'-end (N(7)-methyl 5'-triphosphoguanosine)-ribonucleoside in mRNA + S-adenosyl-L-homocysteine. The catalysed reaction is a 5'-end (N(7)-methyl 5'-triphosphoguanosine)-ribonucleoside in mRNA + S-adenosyl-L-methionine = a 5'-end (N(7)-methyl 5'-triphosphoguanosine)-(2'-O-methyl-ribonucleoside) in mRNA + S-adenosyl-L-homocysteine + H(+). Plays a role in virus budding by binding to the cell membrane and gathering the viral RNA into a nucleocapsid that forms the core of a mature virus particle. During virus entry, may induce genome penetration into the host cytoplasm after hemifusion induced by the surface proteins. Can migrate to the cell nucleus where it modulates host functions. Overcomes the anti-viral effects of host EXOC1 by sequestering and degrading the latter through the proteasome degradation pathway. In terms of biological role, inhibits RNA silencing by interfering with host Dicer. Functionally, prevents premature fusion activity of envelope proteins in trans-Golgi by binding to envelope protein E at pH 6.0. After virion release in extracellular space, gets dissociated from E dimers. Its function is as follows. Acts as a chaperone for envelope protein E during intracellular virion assembly by masking and inactivating envelope protein E fusion peptide. prM is the only viral peptide matured by host furin in the trans-Golgi network probably to avoid catastrophic activation of the viral fusion activity in acidic Golgi compartment prior to virion release. prM-E cleavage is inefficient, and many virions are only partially matured. These uncleaved prM would play a role in immune evasion. May play a role in virus budding. Exerts cytotoxic effects by activating a mitochondrial apoptotic pathway through M ectodomain. May display a viroporin activity. In terms of biological role, binds to host cell surface receptor and mediates fusion between viral and cellular membranes. Efficient virus attachment to cell is, at least in part, mediated by host HSPA5. Envelope protein is synthesized in the endoplasmic reticulum in the form of heterodimer with protein prM. They play a role in virion budding in the ER, and the newly formed immature particle is covered with 60 spikes composed of heterodimer between precursor prM and envelope protein E. The virion is transported to the Golgi apparatus where the low pH causes dissociation of PrM-E heterodimers and formation of E homodimers. prM-E cleavage is inefficient, and many virions are only partially matured. These uncleaved prM would play a role in immune evasion. Functionally, involved in immune evasion, pathogenesis and viral replication. Once cleaved off the polyprotein, is targeted to three destinations: the viral replication cycle, the plasma membrane and the extracellular compartment. Essential for viral replication. Required for formation of the replication complex and recruitment of other non-structural proteins to the ER-derived membrane structures. Excreted as a hexameric lipoparticle that plays a role against host immune response. Antagonizing the complement function. Binds to the host macrophages and dendritic cells. Inhibits signal transduction originating from Toll-like receptor 3 (TLR3). Its function is as follows. Component of the viral RNA replication complex that functions in virion assembly and antagonizes the host alpha/beta interferon antiviral response. Required cofactor for the serine protease function of NS3. May have membrane-destabilizing activity and form viroporins. In terms of biological role, displays three enzymatic activities: serine protease, NTPase and RNA helicase. NS3 serine protease, in association with NS2B, performs its autocleavage and cleaves the polyprotein at dibasic sites in the cytoplasm: C-prM, NS2A-NS2B, NS2B-NS3, NS3-NS4A, NS4A-2K and NS4B-NS5. NS3 RNA helicase binds RNA and unwinds dsRNA in the 3' to 5' direction. Functionally, regulates the ATPase activity of the NS3 helicase activity. NS4A allows NS3 helicase to conserve energy during unwinding. Its function is as follows. Functions as a signal peptide for NS4B and is required for the interferon antagonism activity of the latter. Induces the formation of ER-derived membrane vesicles where the viral replication takes place. Inhibits interferon (IFN)-induced host STAT1 phosphorylation and nuclear translocation, thereby preventing the establishment of cellular antiviral state by blocking the IFN-alpha/beta pathway. Inhibits STAT2 translocation in the nucleus after IFN-alpha treatment. In terms of biological role, replicates the viral (+) and (-) RNA genome, and performs the capping of genomes in the cytoplasm. NS5 methylates viral RNA cap at guanine N-7 and ribose 2'-O positions. Besides its role in RNA genome replication, also prevents the establishment of cellular antiviral state by blocking the interferon-alpha/beta (IFN-alpha/beta) signaling pathway. Inhibits host TYK2 and STAT2 phosphorylation, thereby preventing activation of JAK-STAT signaling pathway. In Ardeidae (herons), this protein is Genome polyprotein.